A 164-amino-acid polypeptide reads, in one-letter code: uncharacterized protein (164 aa).

The segment at 144–164 (GFISPEKEHESEDMTSQSLVA) is disordered.

This is an uncharacterized protein from Synechocystis sp. (strain ATCC 27184 / PCC 6803 / Kazusa).